The chain runs to 66 residues: MKQGTVKWFNAEKGFGFIEVEGENDVFVHFSAINQDGYKSLEEGQAVEFEVVEGDRGPQAANVVKL.

The region spanning 1-66 (MKQGTVKWFN…GPQAANVVKL (66 aa)) is the CSD domain.

Its subcellular location is the cytoplasm. In terms of biological role, involved in cold stress response. In Staphylococcus aureus (strain USA300), this protein is Cold shock protein CspA (cspA).